Reading from the N-terminus, the 526-residue chain is Microphthalmia-associated transcription factor (526 aa).

The tract at residues M1–T54 is disordered. A Phosphoserine; by MTOR modification is found at S5. Residues E15–Y25 are compositionally biased toward basic and acidic residues. Residues P41–T54 are compositionally biased toward low complexity. S180 is modified (phosphoserine; by MAPK). Residues D224–C295 are transactivation. A Phosphoserine; by MARK3 modification is found at S280. Residue K289 forms a Glycyl lysine isopeptide (Lys-Gly) (interchain with G-Cter in SUMO) linkage. One can recognise a bHLH domain in the interval Q311 to L364. Residues K355–H402 adopt a coiled-coil conformation. Residues L374–L395 form a leucine-zipper region. The segment at A401 to C431 is DNA-binding regulation. S405 is modified (phosphoserine; by GSK3). The residue at position 414 (S414) is a Phosphoserine. K423 is covalently cross-linked (Glycyl lysine isopeptide (Lys-Gly) (interchain with G-Cter in SUMO)). S491 carries the post-translational modification Phosphoserine. Residues T496–C526 are disordered. Over residues L499–K509 the composition is skewed to polar residues. S516 carries the phosphoserine; by RPS6KA1 modification.

The protein belongs to the MiT/TFE family. As to quaternary structure, homodimer or heterodimer; dimerization is mediated via the coiled coil region. Efficient DNA binding requires dimerization with another bHLH protein. Binds DNA in the form of homodimer or heterodimer with either TFE3, TFEB or TFEC. Interacts with small GTPases Rag (RagA/RRAGA, RagB/RRAGB, RagC/RRAGC and/or RagD/RRAGD); promoting its recruitment to lysosomal membrane in the presence of nutrients. Interacts with KARS1. Identified in a complex with HINT1 and CTNNB1. Interacts with VSX2. When nutrients are present, phosphorylation by MTOR at Ser-5 via non-canonical mTORC1 pathway promotes ubiquitination by the SCF(BTRC) complex, followed by degradation. Phosphorylation at Ser-405 significantly enhances the ability to bind the tyrosinase promoter. Phosphorylation by MARK3/cTAK1 at Ser-280 promotes association with 14-3-3/YWHA adapters and retention in the cytosol. Phosphorylated at Ser-180 and Ser-516 following KIT signaling, triggering a short live activation: Phosphorylation at Ser-180 and Ser-516 by MAPK and RPS6KA1, respectively, activate the transcription factor activity but also promote ubiquitination and subsequent degradation by the proteasome. Phosphorylated in response to blue light (415nm). Post-translationally, ubiquitinated by the SCF(BTRC) and SCF(FBXW11) complexes following phosphorylation ar Ser-5 by MTOR, leading to its degradation by the proteasome. Ubiquitinated following phosphorylation at Ser-180, leading to subsequent degradation by the proteasome. Deubiquitinated by USP13, preventing its degradation. In terms of tissue distribution, expressed in melanocytes (at protein level). Expressed in the retinal pigment epithelium, brain, and placenta. Expressed in the kidney. As to expression, expressed in the kidney and retinal pigment epithelium. In terms of tissue distribution, expressed in the kidney. Expressed in melanocytes.

The protein resides in the nucleus. It is found in the cytoplasm. Its subcellular location is the lysosome membrane. Its function is as follows. Transcription factor that acts as a master regulator of melanocyte survival and differentiation as well as melanosome biogenesis. Binds to M-boxes (5'-TCATGTG-3') and symmetrical DNA sequences (E-boxes) (5'-CACGTG-3') found in the promoter of pigmentation genes, such as tyrosinase (TYR). Involved in the cellular response to amino acid availability by acting downstream of MTOR: in the presence of nutrients, MITF phosphorylation by MTOR promotes its inactivation. Upon starvation or lysosomal stress, inhibition of MTOR induces MITF dephosphorylation, resulting in transcription factor activity. Plays an important role in melanocyte development by regulating the expression of tyrosinase (TYR) and tyrosinase-related protein 1 (TYRP1). Plays a critical role in the differentiation of various cell types, such as neural crest-derived melanocytes, mast cells, osteoclasts and optic cup-derived retinal pigment epithelium. This is Microphthalmia-associated transcription factor from Homo sapiens (Human).